Here is a 396-residue protein sequence, read N- to C-terminus: L-lactate dehydrogenase (396 aa).

The FMN hydroxy acid dehydrogenase domain occupies 1–380 (MIISAASDYR…SRDSLVQELG (380 aa)). Tyr-24 provides a ligand contact to substrate. FMN is bound by residues Ser-106 and Gln-127. Tyr-129 is a binding site for substrate. Thr-155 serves as a coordination point for FMN. Arg-164 is a binding site for substrate. Lys-251 lines the FMN pocket. His-275 serves as the catalytic Proton acceptor. Arg-278 lines the substrate pocket. 306 to 330 (DSGIRNGLDVVRMIALGADSVLLGR) is a binding site for FMN.

Belongs to the FMN-dependent alpha-hydroxy acid dehydrogenase family. FMN serves as cofactor.

It localises to the cell inner membrane. The catalysed reaction is (S)-lactate + A = pyruvate + AH2. Functionally, catalyzes the conversion of L-lactate to pyruvate. Is coupled to the respiratory chain. The protein is L-lactate dehydrogenase of Citrobacter koseri (strain ATCC BAA-895 / CDC 4225-83 / SGSC4696).